Here is a 203-residue protein sequence, read N- to C-terminus: Probable metallo-hydrolase MJ0296 (203 aa).

Positions 86, 88, 90, 91, 135, 152, and 193 each coordinate Zn(2+).

Belongs to the metallo-beta-lactamase superfamily. Zn(2+) serves as cofactor.

This is Probable metallo-hydrolase MJ0296 from Methanocaldococcus jannaschii (strain ATCC 43067 / DSM 2661 / JAL-1 / JCM 10045 / NBRC 100440) (Methanococcus jannaschii).